Reading from the N-terminus, the 294-residue chain is ADP-ribosyl-[dinitrogen reductase] glycohydrolase (294 aa).

ADP-D-ribose contacts are provided by residues 100 to 102 (NTC), E121, H158, and Y212. Mn(2+) is bound by residues D243, D245, and T246.

Belongs to the ADP-ribosylglycohydrolase family. Monomer. The cofactor is Mn(2+).

It is found in the cytoplasm. The enzyme catalyses N(omega)-alpha-(ADP-D-ribosyl)-L-arginyl-[dinitrogen reductase] + H2O = L-arginyl-[dinitrogen reductase] + ADP-D-ribose. In terms of biological role, involved in the regulation of nitrogen fixation activity by the reversible ADP-ribosylation of one subunit of the homodimeric dinitrogenase reductase component of the nitrogenase enzyme complex. The ADP-ribosyltransferase (DraT) transfers the ADP-ribose group from NAD to dinitrogenase reductase. The ADP-ribose group is removed through the action of the ADP-ribosylglycohydrolase (DraG, this entry). This Rhodospirillum rubrum protein is ADP-ribosyl-[dinitrogen reductase] glycohydrolase.